The chain runs to 295 residues: Fructose-bisphosphate aldolase class 1 (295 aa).

The active-site Proton acceptor is E176. The active-site Schiff-base intermediate with dihydroxyacetone-P is the K213.

Belongs to the class I fructose-bisphosphate aldolase family.

The catalysed reaction is beta-D-fructose 1,6-bisphosphate = D-glyceraldehyde 3-phosphate + dihydroxyacetone phosphate. It participates in carbohydrate degradation; glycolysis; D-glyceraldehyde 3-phosphate and glycerone phosphate from D-glucose: step 4/4. This is Fructose-bisphosphate aldolase class 1 from Clostridium acetobutylicum (strain ATCC 824 / DSM 792 / JCM 1419 / IAM 19013 / LMG 5710 / NBRC 13948 / NRRL B-527 / VKM B-1787 / 2291 / W).